Here is a 299-residue protein sequence, read N- to C-terminus: Regucalcin (299 aa).

Residue Glu18 participates in a divalent metal cation binding. Arg101, Asn103, and Glu121 together coordinate substrate. Position 144 is an N6-succinyllysine (Lys144). A divalent metal cation contacts are provided by Asn154 and Asp204. Catalysis depends on Asp204, which acts as the Proton donor/acceptor. N6-succinyllysine is present on residues Lys244 and Lys253.

Belongs to the SMP-30/CGR1 family. As to quaternary structure, monomer. It depends on Zn(2+) as a cofactor. Requires Mn(2+) as cofactor. Ca(2+) serves as cofactor. Mg(2+) is required as a cofactor. In terms of tissue distribution, mainly present in the liver. Weak expression was found in the brain, lung and kidney.

The protein localises to the cytoplasm. The catalysed reaction is D-glucono-1,5-lactone + H2O = D-gluconate + H(+). It functions in the pathway cofactor biosynthesis; L-ascorbate biosynthesis via UDP-alpha-D-glucuronate pathway; L-ascorbate from UDP-alpha-D-glucuronate: step 3/4. Gluconolactonase with low activity towards other sugar lactones, including gulonolactone and galactonolactone. Catalyzes a key step in ascorbic acid (vitamin C) biosynthesis. Can also hydrolyze diisopropyl phosphorofluoridate and phenylacetate (in vitro). Calcium-binding protein. Modulates Ca(2+) signaling, and Ca(2+)-dependent cellular processes and enzyme activities. This chain is Regucalcin (Rgn), found in Mus musculus (Mouse).